Consider the following 87-residue polypeptide: Phosphoribosyl-ATP pyrophosphatase (87 aa).

It belongs to the PRA-PH family.

It is found in the cytoplasm. The catalysed reaction is 1-(5-phospho-beta-D-ribosyl)-ATP + H2O = 1-(5-phospho-beta-D-ribosyl)-5'-AMP + diphosphate + H(+). It functions in the pathway amino-acid biosynthesis; L-histidine biosynthesis; L-histidine from 5-phospho-alpha-D-ribose 1-diphosphate: step 2/9. The protein is Phosphoribosyl-ATP pyrophosphatase of Beutenbergia cavernae (strain ATCC BAA-8 / DSM 12333 / CCUG 43141 / JCM 11478 / NBRC 16432 / NCIMB 13614 / HKI 0122).